A 321-amino-acid polypeptide reads, in one-letter code: Fibronectin type III domain-containing protein 8 (321 aa).

In terms of domain architecture, Fibronectin type-III spans Val175–Thr277.

This is Fibronectin type III domain-containing protein 8 (FNDC8) from Bos taurus (Bovine).